Consider the following 182-residue polypeptide: Triplatin (182 aa).

The first 18 residues, 1–18 (MKMIIAVTFLGIVTIAFA), serve as a signal peptide directing secretion. 3 disulfide bridges follow: Cys-21-Cys-133, Cys-55-Cys-177, and Cys-88-Cys-105.

Belongs to the calycin superfamily. Triabin family. In terms of tissue distribution, expressed in salivary glands.

The protein resides in the secreted. Functionally, inhibits platelet aggregation and vasoconstriction through binding to distinct eicosanoids involved in inflammation (acts as a scavenger), and has a role in inhibiting host innate immunity by impairing platelet-assisted formation of neutrophil extracellular traps (NETs). Inhibits platelet aggregation by collagen, and low doses of thromboxane A2 mimetic (TXA2 mimetic), and arachidonic acid (AA) without affecting aggregation induced by ADP, convulxin (GP6 agonist), and PMA. Binds to TXA2, TXB2, prostaglandine H2 mimetic (PGH2 mimetic), PGJ2, and PGF2alpha. Binding is not observed to leukotrienes, AA, and biogenic amines (PGE1, 5(S)-HETE, 12(S)-HETE, 20-HETE, norepinephrine, epinephrine, serotonin, LTC4 and ADP). Induces relaxation of aorta rat previously contracted with TXA2 mimetic. Moreover, it also impairs platelet-assisted formation of neutrophil extracellular traps (NETs). NETs are web-like structures of DNA and proteins that play an important role in killing of pathogens. In addition, NETs are implicated in thrombus formation. In vivo, this protein exhibits antithrombotic activity in two distinct mice models that are highly dependent on platelets. It is noteworthy that it inhibits thrombosis without promoting excessive bleeding. This is Triplatin from Triatoma infestans (Assassin bug).